The following is a 1725-amino-acid chain: Latrophilin Cirl (1725 aa).

Residues 1 to 757 (MALNELGNCA…LFTMFDGNMR (757 aa)) are Extracellular-facing. The 90-residue stretch at 18 to 107 (ACEGKQLTIE…KYLEAHYQCI (90 aa)) folds into the SUEL-type lectin domain. A glycan (N-linked (GlcNAc...) asparagine) is linked at Asn-135. Positions 164–284 (AVQPTHSTPS…SAANNSVNIG (121 aa)) are disordered. Low complexity-rich tracts occupy residues 167 to 176 (PTHSTPSSST) and 224 to 236 (SSSS…SAGN). N-linked (GlcNAc...) asparagine glycosylation is found at Asn-236, Asn-278, Asn-326, Asn-388, Asn-645, Asn-693, and Asn-720. Over residues 259–282 (LLTTKSSPNRTPGTTASAANNSVN) the composition is skewed to polar residues. Residues 361 to 390 (DDEYDDDLPAASSTTPQPSNNGGDCVHNSS) are disordered. Positions 371 to 390 (ASSTTPQPSNNGGDCVHNSS) are enriched in polar residues. A GAIN-B domain is found at 551-744 (RNVVQKVKNI…AILMDVVDEH (194 aa)). Disulfide bonds link Cys-699–Cys-726 and Cys-714–Cys-728. The segment at 699–744 (CVFWNYIDHAWSANGCSLESTNRTHSVCSCNHLTNFAILMDVVDEH) is GPS. The chain crosses the membrane as a helical span at residues 758–778 (IFIYISVAICVVFIIIALLTL). Over 779-791 (KLFNGVFVKSART) the chain is Cytoplasmic. A helical membrane pass occupies residues 792–812 (SIYSSIYICLLAIELLFLLGI). At 813 to 818 (EQTETS) the chain is on the extracellular side. The chain crosses the membrane as a helical span at residues 819 to 839 (IFCGFITVFLHCAILSGTAWF). The Cytoplasmic segment spans residues 840–865 (CYEAFHSYSTLTSDELLLEVDQTPKV). A helical transmembrane segment spans residues 866–886 (NCYYLLSYGLSLSVVAISLVI). Over 887–910 (DPSTYTQNDYCVLMEANALFYSTF) the chain is Extracellular. A helical transmembrane segment spans residues 911-931 (VAPVLIFFVAAITYTFLSWII). The Cytoplasmic segment spans residues 932-958 (MRRKSRTALKTKEHTRLANVRFDIRCS). Residues 959–979 (FVFLLLLSVVWCCAYFYLRGA) traverse the membrane as a helical segment. The Extracellular segment spans residues 980–986 (KLDEDGA). Residues 987 to 1007 (PIYGYCFICFNTLLGIYIFVF) form a helical membrane-spanning segment. The Cytoplasmic segment spans residues 1008 to 1725 (HCIQNEKIRR…VRCYLEPLAK (718 aa)). Residues 1056–1088 (TANQSAGTLSKSKSKLPLGAGDEARDGDAQQQQ) form a disordered region. Ser-1153 bears the Phosphoserine mark. 4 disordered regions span residues 1236 to 1263 (HNNQ…LHSR), 1309 to 1337 (QQLQ…AEQH), 1472 to 1555 (GGGS…SDER), and 1636 to 1705 (LFGH…QARH). The segment covering 1237-1246 (NNQHGKKKRG) has biased composition (basic residues). Phosphoserine is present on residues Ser-1255 and Ser-1262. Residues 1309–1327 (QQLQQQQLRQQRQQQQQQL) are compositionally biased toward low complexity. Phosphoserine is present on residues Ser-1328 and Ser-1329. The segment covering 1478-1496 (GGSVTSRSQQQQQQQLKQK) has biased composition (low complexity). 2 stretches are compositionally biased toward acidic residues: residues 1505–1522 (DDDD…DEVT) and 1532–1543 (CDDEDNESDIDD). Residues 1651–1666 (QTPAQKRQQLQKLSPQ) are compositionally biased toward polar residues. A compositionally biased stretch (low complexity) spans 1667 to 1683 (STTSSSSHTSHSNPQHA). Basic residues predominate over residues 1684-1693 (PAHHLQHHHT). Positions 1694-1705 (QQQQQQQQQARH) are enriched in low complexity.

It belongs to the G-protein coupled receptor 2 family. LN-TM7 subfamily. In terms of assembly, forms a heterodimer, consisting of a large extracellular region non-covalently linked to a seven-transmembrane moiety. Post-translationally, proteolytically cleaved into 2 subunits, an extracellular subunit and a seven-transmembrane subunit.

Its subcellular location is the cell membrane. The chain is Latrophilin Cirl from Drosophila mojavensis (Fruit fly).